The primary structure comprises 316 residues: Acetaldehyde dehydrogenase (316 aa).

11 to 14 (SGNI) is an NAD(+) binding site. The active-site Acyl-thioester intermediate is the Cys131. Residues 162-170 (SAGPGTRAN) and Asn289 contribute to the NAD(+) site.

The protein belongs to the acetaldehyde dehydrogenase family. In terms of assembly, interacts with MhpE.

It carries out the reaction acetaldehyde + NAD(+) + CoA = acetyl-CoA + NADH + H(+). The protein operates within aromatic compound metabolism; 3-phenylpropanoate degradation. In terms of biological role, catalyzes the conversion of acetaldehyde to acetyl-CoA, using NAD(+) and coenzyme A. Is the final enzyme in the meta-cleavage pathway for the degradation of aromatic compounds. The sequence is that of Acetaldehyde dehydrogenase from Klebsiella pneumoniae (strain 342).